Reading from the N-terminus, the 352-residue chain is MSVNTNEGSKNLWKDLPLELLSSVMTFLEIKDNVRASVVCKSWFEAAVSVRVIDKSPWLMYFPETKNTYDFYDPSNCKKYTMELPKSLVGFIVRYSKDGWLLMSQEDSSHFVLFNPFTMDVVALPFLHLFTYYQLVGFSSAPTSSECVVFTIKDYDPGHVTIRTWSPGQTMWTSMQVESQFLDVDHNNVVFSNGVFYCLNQRNHVAVFDPSLRTWNVLDVPPPRCPDDKSWNEGKFMVGYKGDILVIRTYENKDPLVFKLDLTRGIWEEKDTLGSLTIFVSRKSCESRTYVKDGMLRNSVYFPELCYNEKQSVVYSFDEGRYHLREHDLDWGKQLSSDNIWIEPPKNAFELV.

An F-box domain is found at 10-56; the sequence is KNLWKDLPLELLSSVMTFLEIKDNVRASVVCKSWFEAAVSVRVIDKS. 2 Kelch repeats span residues 148 to 189 and 190 to 234; these read VVFT…HNNV and VFSN…WNEG.

This chain is F-box/kelch-repeat protein At1g57790, found in Arabidopsis thaliana (Mouse-ear cress).